The sequence spans 1038 residues: DNA polymerase delta catalytic subunit (1038 aa).

The disordered stretch occupies residues 1 to 29 (MSHSIPITSSPPPALKKLKLPNGSEEPSE). C942, C945, C958, and C961 together coordinate Zn(2+). The CysA-type zinc-finger motif lies at 942-961 (CVSCRTPLKKDNLGALCPNC). Positions 992, 995, 1005, and 1010 each coordinate [4Fe-4S] cluster. The CysB motif motif lies at 992–1010 (CQRCQGSLHQEVLCSNKDC).

This sequence belongs to the DNA polymerase type-B family. In terms of assembly, heterodimer with subunits of 125 kDa and 50 kDa. The 125 kDa subunit contains the polymerase active site and most likely the active site for the 3'-5' exonuclease activity. [4Fe-4S] cluster is required as a cofactor.

It localises to the nucleus. It carries out the reaction DNA(n) + a 2'-deoxyribonucleoside 5'-triphosphate = DNA(n+1) + diphosphate. This polymerase possesses two enzymatic activities: DNA synthesis (polymerase) and an exonucleolytic activity that degrades single-stranded DNA in the 3'- to 5'-direction. The protein is DNA polymerase delta catalytic subunit (POL3) of Candida albicans (Yeast).